Here is a 300-residue protein sequence, read N- to C-terminus: Ribosomal protein bS6--L-glutamate ligase (300 aa).

The 184-residue stretch at Met-104–Glu-287 folds into the ATP-grasp domain. ATP-binding positions include Lys-141, Glu-178–Tyr-179, Asp-187, and Arg-211–Asn-213. Residues Asp-248, Glu-260, and Asn-262 each contribute to the Mg(2+) site. Residues Asp-248, Glu-260, and Asn-262 each coordinate Mn(2+).

The protein belongs to the RimK family. Mg(2+) serves as cofactor. Requires Mn(2+) as cofactor.

An L-glutamate ligase that catalyzes the ATP-dependent post-translational addition of glutamate residues to the C-terminus of ribosomal protein bS6 (RpsF). Is also able to catalyze the synthesis of poly-alpha-glutamate in vitro, via ATP hydrolysis from unprotected glutamate as substrate. The number of glutamate residues added to either RpsF or to poly-alpha-glutamate changes with pH. This is Ribosomal protein bS6--L-glutamate ligase from Escherichia coli O139:H28 (strain E24377A / ETEC).